The chain runs to 351 residues: Translation initiation factor eIF2B subunit beta (351 aa).

The protein belongs to the eIF-2B alpha/beta/delta subunits family. As to quaternary structure, component of the translation initiation factor 2B (eIF2B) complex which is a heterodecamer of two sets of five different subunits: alpha, beta, gamma, delta and epsilon. Subunits alpha, beta and delta comprise a regulatory subcomplex and subunits epsilon and gamma comprise a catalytic subcomplex. Within the complex, the hexameric regulatory complex resides at the center, with the two heterodimeric catalytic subcomplexes bound on opposite sides.

It is found in the cytoplasm. Its subcellular location is the cytosol. Activated by the chemical integrated stress response (ISR) inhibitor ISRIB which stimulates guanine nucleotide exchange factor activity for both phosphorylated and unphosphorylated eIF2. Functionally, acts as a component of the translation initiation factor 2B (eIF2B) complex, which catalyzes the exchange of GDP for GTP on eukaryotic initiation factor 2 (eIF2) gamma subunit. Its guanine nucleotide exchange factor activity is repressed when bound to eIF2 complex phosphorylated on the alpha subunit, thereby limiting the amount of methionyl-initiator methionine tRNA available to the ribosome and consequently global translation is repressed. This is Translation initiation factor eIF2B subunit beta (Eif2b2) from Mus musculus (Mouse).